A 304-amino-acid polypeptide reads, in one-letter code: Sulfate adenylyltransferase subunit 2 (304 aa).

This sequence belongs to the PAPS reductase family. CysD subfamily. In terms of assembly, heterodimer composed of CysD, the smaller subunit, and CysNC.

It catalyses the reaction sulfate + ATP + H(+) = adenosine 5'-phosphosulfate + diphosphate. It participates in sulfur metabolism; hydrogen sulfide biosynthesis; sulfite from sulfate: step 1/3. In terms of biological role, with CysN forms the ATP sulfurylase (ATPS) that catalyzes the adenylation of sulfate producing adenosine 5'-phosphosulfate (APS) and diphosphate, the first enzymatic step in sulfur assimilation pathway. APS synthesis involves the formation of a high-energy phosphoric-sulfuric acid anhydride bond driven by GTP hydrolysis by CysN coupled to ATP hydrolysis by CysD. This is Sulfate adenylyltransferase subunit 2 from Xylella fastidiosa (strain Temecula1 / ATCC 700964).